A 662-amino-acid chain; its full sequence is MERFLLKANYTPKGDQPKAIKELTEGIEKGLKMQTLLGVTGSGKTFTMANVIANVNKPTLVIAPNKTLAAQLCAEFREFFPENAVEYFVSYYDYYQPEAYLPATDTYIEKDSAINDEIDKLRHSATAALFERRDVIIVASVSCIYGLGDPQEYRELLLSVRKGQIYEREAILRKLVDIQYERNEYDLTRGKFRVRGDVIEVFPASYTDRAVRIELFGDEVDRILEFDTLTGEIIGELKHVAIFPASHFATSKEKLERAIKSIEEELEERLRYFEERGKLLEAQRLKQRTLYDIEMLREVGYTKGIENYSRHLTGRKPGEPPYTLIDYFPKDFLMIIDESHITIPQIRGMYEGDRSRKEALVEYGFRLPSAFDNRPLKFHEFEARINQVVFVSATPGPYELKHSQKIVEQIIRPTGLVDPEVEVRPTRGQVDDLYGEIKERVARNERVLVTTLTKKMAEDLTEYFREMGVKVRYLHSDIDTLERVEILRDLRLGVFDVLVGINLLREGLDLPEVSLVAILDADKEGYLRSERSLIQTIGRAARNVNGKVIMYADTVTASMQKAIDETNRRRKLQMEYNRKHGITPQTVQKAVRDVIEATRAVTAELPEVKRDFIQKMSAKEFKQYVEKLTREMKEAAKALEFEKAAMLRDLIIELRAQKAVKK.

Positions 25-412 (EGIEKGLKMQ…SQKIVEQIIR (388 aa)) constitute a Helicase ATP-binding domain. Position 38–45 (38–45 (GVTGSGKT)) interacts with ATP. Residues 91-114 (YYDYYQPEAYLPATDTYIEKDSAI) carry the Beta-hairpin motif. Residues 429–595 (QVDDLYGEIK…TVQKAVRDVI (167 aa)) form the Helicase C-terminal domain. One can recognise a UVR domain in the interval 622 to 657 (KQYVEKLTREMKEAAKALEFEKAAMLRDLIIELRAQ).

It belongs to the UvrB family. As to quaternary structure, forms a heterotetramer with UvrA during the search for lesions. Interacts with UvrC in an incision complex.

The protein resides in the cytoplasm. Functionally, the UvrABC repair system catalyzes the recognition and processing of DNA lesions. A damage recognition complex composed of 2 UvrA and 2 UvrB subunits scans DNA for abnormalities. Upon binding of the UvrA(2)B(2) complex to a putative damaged site, the DNA wraps around one UvrB monomer. DNA wrap is dependent on ATP binding by UvrB and probably causes local melting of the DNA helix, facilitating insertion of UvrB beta-hairpin between the DNA strands. Then UvrB probes one DNA strand for the presence of a lesion. If a lesion is found the UvrA subunits dissociate and the UvrB-DNA preincision complex is formed. This complex is subsequently bound by UvrC and the second UvrB is released. If no lesion is found, the DNA wraps around the other UvrB subunit that will check the other stand for damage. The chain is UvrABC system protein B from Carboxydothermus hydrogenoformans (strain ATCC BAA-161 / DSM 6008 / Z-2901).